Reading from the N-terminus, the 251-residue chain is Small ribosomal subunit protein uS2 (251 aa).

The protein belongs to the universal ribosomal protein uS2 family.

The protein is Small ribosomal subunit protein uS2 of Synechococcus sp. (strain ATCC 27144 / PCC 6301 / SAUG 1402/1) (Anacystis nidulans).